The chain runs to 447 residues: Rab GDP dissociation inhibitor alpha (447 aa).

A Phosphoserine modification is found at serine 427.

This sequence belongs to the Rab GDI family. In terms of assembly, interacts with RHOH. Interacts with the non-phosphorylated forms of RAB1A, RAB3A, RAB5A, RAB5B, RAB5C, RAB8A, RAB8B, RAB10, RAB12, RAB35, and RAB43. Interacts with RAB3A.

Its subcellular location is the cytoplasm. It localises to the golgi apparatus. The protein localises to the trans-Golgi network. In terms of biological role, regulates the GDP/GTP exchange reaction of most Rab proteins by inhibiting the dissociation of GDP from them, and the subsequent binding of GTP to them. Promotes the dissociation of GDP-bound Rab proteins from the membrane and inhibits their activation. Promotes the dissociation of RAB1A, RAB3A, RAB5A and RAB10 from membranes. This Bos taurus (Bovine) protein is Rab GDP dissociation inhibitor alpha (GDI1).